Reading from the N-terminus, the 510-residue chain is 1,3-beta-glucanosyltransferase gas5 (510 aa).

Positions 1 to 22 are cleaved as a signal peptide; that stretch reads MNFLHFLTTSLLLLGGSRLALA. C70 and C99 are disulfide-bonded. Y88 is a (1,3-beta-D-glucosyl)n binding site. An N-linked (GlcNAc...) asparagine glycan is attached at N147. Positions 158, 159, 200, and 205 each coordinate (1,3-beta-D-glucosyl)n. E159 functions as the Proton donor in the catalytic mechanism. 2 disulfide bridges follow: C214–C353 and C232–C264. 2 N-linked (GlcNAc...) asparagine glycosylation sites follow: N216 and N252. Residue E261 is the Nucleophile of the active site. Y300 contributes to the (1,3-beta-D-glucosyl)n binding site. 3 N-linked (GlcNAc...) asparagine glycosylation sites follow: N318, N337, and N397. A disordered region spans residues 424–456; it reads QSSTSGSSSGSSSASTTASSSSVSSGSSISSGS. S485 carries the GPI-anchor amidated serine lipid modification. Positions 486 to 510 are cleaved as a propeptide — removed in mature form; the sequence is SASTFNLSRFYVFAGILAISGLVFA. Residue N491 is glycosylated (N-linked (GlcNAc...) asparagine).

Belongs to the glycosyl hydrolase 72 family. The GPI-anchor is attached to the protein in the endoplasmic reticulum and serves to target the protein to the cell surface. There, the glucosamine-inositol phospholipid moiety is cleaved off and the GPI-modified mannoprotein is covalently attached via its lipidless GPI glycan remnant to the 1,6-beta-glucan of the outer cell wall layer.

The protein localises to the secreted. Its subcellular location is the cell wall. It is found in the membrane. Splits internally a 1,3-beta-glucan molecule and transfers the newly generated reducing end (the donor) to the non-reducing end of another 1,3-beta-glucan molecule (the acceptor) forming a 1,3-beta linkage, resulting in the elongation of 1,3-beta-glucan chains in the cell wall. The chain is 1,3-beta-glucanosyltransferase gas5 (gas5) from Schizosaccharomyces pombe (strain 972 / ATCC 24843) (Fission yeast).